A 358-amino-acid polypeptide reads, in one-letter code: Chorismate synthase (358 aa).

Residues 39 to 61 (ADIQPFLDKRRPGQSRHTTQRQE) form a disordered region. Residues Arg48 and Arg54 each coordinate NADP(+). Residues 125–127 (RSS), 237–238 (NA), Gly284, 299–303 (KPTSS), and Arg325 each bind FMN.

The protein belongs to the chorismate synthase family. As to quaternary structure, homotetramer. The cofactor is FMNH2.

The catalysed reaction is 5-O-(1-carboxyvinyl)-3-phosphoshikimate = chorismate + phosphate. The protein operates within metabolic intermediate biosynthesis; chorismate biosynthesis; chorismate from D-erythrose 4-phosphate and phosphoenolpyruvate: step 7/7. Catalyzes the anti-1,4-elimination of the C-3 phosphate and the C-6 proR hydrogen from 5-enolpyruvylshikimate-3-phosphate (EPSP) to yield chorismate, which is the branch point compound that serves as the starting substrate for the three terminal pathways of aromatic amino acid biosynthesis. This reaction introduces a second double bond into the aromatic ring system. The sequence is that of Chorismate synthase from Sphingopyxis alaskensis (strain DSM 13593 / LMG 18877 / RB2256) (Sphingomonas alaskensis).